We begin with the raw amino-acid sequence, 190 residues long: dCTP deaminase, dUMP-forming (190 aa).

DCTP contacts are provided by residues 101-106, D119, 127-129, Q148, Y162, and Q174; these read KSSLGR and TLE. Residue E129 is the Proton donor/acceptor of the active site. The segment at 161–190 is disordered; sequence PYGSSGVGSKYQGQRGPTPSRSYQNFIRST. Residues 171–190 show a composition bias toward polar residues; sequence YQGQRGPTPSRSYQNFIRST.

This sequence belongs to the dCTP deaminase family. In terms of assembly, homotrimer.

The enzyme catalyses dCTP + 2 H2O = dUMP + NH4(+) + diphosphate. It functions in the pathway pyrimidine metabolism; dUMP biosynthesis; dUMP from dCTP: step 1/1. Its function is as follows. Bifunctional enzyme that catalyzes both the deamination of dCTP to dUTP and the hydrolysis of dUTP to dUMP without releasing the toxic dUTP intermediate. The polypeptide is dCTP deaminase, dUMP-forming (Mycobacterium marinum (strain ATCC BAA-535 / M)).